We begin with the raw amino-acid sequence, 185 residues long: Adenine phosphoribosyltransferase (185 aa).

The protein belongs to the purine/pyrimidine phosphoribosyltransferase family. As to quaternary structure, homodimer.

The protein resides in the cytoplasm. It carries out the reaction AMP + diphosphate = 5-phospho-alpha-D-ribose 1-diphosphate + adenine. It functions in the pathway purine metabolism; AMP biosynthesis via salvage pathway; AMP from adenine: step 1/1. Catalyzes a salvage reaction resulting in the formation of AMP, that is energically less costly than de novo synthesis. This Nocardioides sp. (strain ATCC BAA-499 / JS614) protein is Adenine phosphoribosyltransferase.